The following is a 414-amino-acid chain: MRVDRQKRNNFTYRQTVYIILTFYIVYRGKCNSTDTNNSTSTSDSTVSDTSVYSTPNLPSTFFTTLDTSTGSQISTTSNTISSTTNTLAASSITTLNTSTNTTSYTASTLTALSSTHTNSPILSNNATLYTTSLDNTTTDITSSESSINASTIHNTTYSPVTSIAVNCTVAANETNNSSSKNCQQDIGTIRVKSTTLTAEEGKNITIQGNSTWNCPNVVWYRHYNWSTHGHHIYPNRRYQTPTYQHKILTSHPICHPDVSSPAAYHDLCRSCNKTELRIYDLNTTNSGRYSRRCYKEYNHDGPHEDENFGLTVNPRNDTDNHTTPLCPRYVGTQSEEDEDDDYTLSTITNNNMRKTSHRDISHGTRTTWALTLICIACILLFFVRRALNKRYRPLRDDISESSFVVRYHPEHED.

A helical membrane pass occupies residues 367-384 (TTWALTLICIACILLFFV).

It localises to the virion membrane. This is an uncharacterized protein from Human cytomegalovirus (strain Merlin) (HHV-5).